The primary structure comprises 430 residues: 3-phosphoshikimate 1-carboxyvinyltransferase (430 aa).

3-phosphoshikimate contacts are provided by lysine 20, serine 21, and arginine 25. Residue lysine 20 participates in phosphoenolpyruvate binding. Residues glycine 92 and arginine 120 each contribute to the phosphoenolpyruvate site. 3-phosphoshikimate contacts are provided by serine 166, glutamine 168, aspartate 312, and lysine 339. Phosphoenolpyruvate is bound at residue glutamine 168. The active-site Proton acceptor is aspartate 312. Residues arginine 343 and arginine 387 each coordinate phosphoenolpyruvate.

Belongs to the EPSP synthase family. In terms of assembly, monomer.

It localises to the cytoplasm. The enzyme catalyses 3-phosphoshikimate + phosphoenolpyruvate = 5-O-(1-carboxyvinyl)-3-phosphoshikimate + phosphate. The protein operates within metabolic intermediate biosynthesis; chorismate biosynthesis; chorismate from D-erythrose 4-phosphate and phosphoenolpyruvate: step 6/7. Functionally, catalyzes the transfer of the enolpyruvyl moiety of phosphoenolpyruvate (PEP) to the 5-hydroxyl of shikimate-3-phosphate (S3P) to produce enolpyruvyl shikimate-3-phosphate and inorganic phosphate. This chain is 3-phosphoshikimate 1-carboxyvinyltransferase, found in Lactococcus lactis subsp. cremoris (strain MG1363).